The following is a 130-amino-acid chain: Protein NrdI (130 aa).

Belongs to the NrdI family.

In terms of biological role, probably involved in ribonucleotide reductase function. This Staphylococcus carnosus (strain TM300) protein is Protein NrdI.